The sequence spans 282 residues: Glycine/sarcosine N-methyltransferase (282 aa).

Residues 1–23 (MTSTQNHPLQTQDDQQRFGQSPE) are compositionally biased toward polar residues. The disordered stretch occupies residues 1-27 (MTSTQNHPLQTQDDQQRFGQSPESVRE). Residues Y35, W43, R52, A76, D97, 123 to 124 (DW), and L141 contribute to the S-adenosyl-L-methionine site. Substrate-binding residues include N143, R176, and Y217.

The protein belongs to the class I-like SAM-binding methyltransferase superfamily. Glycine N-methyltransferase family. In terms of assembly, monomer.

The enzyme catalyses glycine + 2 S-adenosyl-L-methionine = N,N-dimethylglycine + 2 S-adenosyl-L-homocysteine + 2 H(+). It catalyses the reaction glycine + S-adenosyl-L-methionine = sarcosine + S-adenosyl-L-homocysteine + H(+). The catalysed reaction is sarcosine + S-adenosyl-L-methionine = N,N-dimethylglycine + S-adenosyl-L-homocysteine + H(+). It functions in the pathway amine and polyamine biosynthesis; betaine biosynthesis via glycine pathway; betaine from glycine: step 1/3. Its pathway is amine and polyamine biosynthesis; betaine biosynthesis via glycine pathway; betaine from glycine: step 2/3. Catalyzes the methylation of glycine and sarcosine to sarcosine and dimethylglycine, respectively, with S-adenosylmethionine (AdoMet) acting as the methyl donor. It has strict specificity for glycine and sarcosine as the methyl group acceptors. This chain is Glycine/sarcosine N-methyltransferase, found in Parasynechococcus marenigrum (strain WH8102).